A 331-amino-acid chain; its full sequence is Glyceraldehyde-3-phosphate dehydrogenase (331 aa).

Residues 11–12 (RI), Asp33, and Arg78 contribute to the NAD(+) site. D-glyceraldehyde 3-phosphate-binding positions include 148–150 (SCT), Thr179, 208–209 (TG), and Arg231. Catalysis depends on Cys149, which acts as the Nucleophile. Asn313 lines the NAD(+) pocket.

It belongs to the glyceraldehyde-3-phosphate dehydrogenase family. Homotetramer.

It localises to the cytoplasm. It catalyses the reaction D-glyceraldehyde 3-phosphate + phosphate + NAD(+) = (2R)-3-phospho-glyceroyl phosphate + NADH + H(+). It functions in the pathway carbohydrate degradation; glycolysis; pyruvate from D-glyceraldehyde 3-phosphate: step 1/5. The polypeptide is Glyceraldehyde-3-phosphate dehydrogenase (GPD) (Eremothecium gossypii (strain ATCC 10895 / CBS 109.51 / FGSC 9923 / NRRL Y-1056) (Yeast)).